Consider the following 132-residue polypeptide: Acid shock protein (132 aa).

Residues 1–21 (MKKVLALIVAATMGLSSVAFA) form the signal peptide. A propeptide spanning residues 22 to 69 (AETTAAATAAPAATSTTAAPAVEKAAPAKATHHKKHKATKQTTEQKAQ) is cleaved from the precursor. Residues 30-50 (AAPAATSTTAAPAVEKAAPAK) are compositionally biased toward low complexity. Residues 30-132 (AAPAATSTTA…AKKSATAPAA (103 aa)) form a disordered region. Basic residues predominate over residues 51–60 (ATHHKKHKAT). The segment covering 61-99 (KQTTEQKAQAAKKAVKKAPAQKAQAAKKAVKKAPVQKAQ) has biased composition (low complexity). The segment covering 100-124 (AAKKHVKKAPAQKAQAAKKHHKTAK) has biased composition (basic residues).

The protein belongs to the Asr family. Post-translationally, proteolytic processing gives rise to the active protein.

The protein localises to the periplasm. Functionally, required for growth and/or survival at acidic conditions. The protein is Acid shock protein of Yersinia enterocolitica serotype O:8 / biotype 1B (strain NCTC 13174 / 8081).